The sequence spans 647 residues: DNA mismatch repair protein MutL (647 aa).

Belongs to the DNA mismatch repair MutL/HexB family.

Functionally, this protein is involved in the repair of mismatches in DNA. It is required for dam-dependent methyl-directed DNA mismatch repair. May act as a 'molecular matchmaker', a protein that promotes the formation of a stable complex between two or more DNA-binding proteins in an ATP-dependent manner without itself being part of a final effector complex. The chain is DNA mismatch repair protein MutL from Bacillus cereus (strain G9842).